The following is a 569-amino-acid chain: Beta-galactoside-specific lectin 3 (569 aa).

Residues 1-33 (MNAVMDSRGAWVSCFLILGLVFGATVKAETKFS) form the signal peptide. The active site involves Glu198. Disulfide bonds link Cys280–Cys311, Cys327–Cys346, and Cys370–Cys387. Positions 288–307 (EVRYWPLVIRPVLENSGAVD) are cleaved as a propeptide — connecting peptide. Positions 314–441 (SEPTVRIVGR…YSLGQGWLAG (128 aa)) constitute a Ricin B-type lectin 1 domain. 329 to 331 (DVR) contacts D-galactose. 2 N-linked (GlcNAc...) asparagine glycosylation sites follow: Asn402 and Asn442. In terms of domain architecture, Ricin B-type lectin 2 spans 445–568 (APREVTIYGF…GNPNQMWLPV (124 aa)). 2 cysteine pairs are disulfide-bonded: Cys458/Cys471 and Cys497/Cys514. 541–543 (DVA) provides a ligand contact to D-galactose.

It belongs to the ribosome-inactivating protein family. Type 2 RIP subfamily. In terms of assembly, disulfide-linked dimer of A and B chains.

The enzyme catalyses Endohydrolysis of the N-glycosidic bond at one specific adenosine on the 28S rRNA.. The A chain is responsible for inhibiting protein synthesis through the catalytic inactivation of 60S ribosomal subunits by removing adenine from position 4,324 of 28S rRNA. The B chain binds to cell receptors and probably facilitates the entry into the cell of the A chain; B chains are also responsible for cell agglutination (lectin activity). Inhibits growth of the human tumor cell line Molt4. In Viscum album (European mistletoe), this protein is Beta-galactoside-specific lectin 3.